We begin with the raw amino-acid sequence, 768 residues long: MKVIGLADSELESSLRKAGIGMSASEARSIASILGRDPTLAELFCYDAMWSEHCSYKSSRAVLREFLPTEGPNVVLGPVEDAGIVSIDDEWCVVISHESHNHPSQILPNEGAATGIGGIVRDVNCMGARVVATADPLRFGDPYGRESSRVRWVAEGVVDGIWQYGNALGVPVIAGDVVFSRCFDYNCLVNVVAIGVVRRDEIIRSRAPPGSGEKGYDVILIGKPTDSSGLGGVIFASDTLREEEEEANRGAVQIPDPFLKNVLFKANEDLFRLVREKGVEIGFKDLGGGGLTCASSEMGAAGGYGMEIDLDRLHVAGEFPPEVLCIAETQERFLIIAPRELRERILKIYNEDWDLPNVYEGARASVIGRVTTHDRYIVRHRGEEVVNVPIKHLTGGIRYERVWRPRIRNLVEPDVRMPEDLNRVMLDMLASPNIASREHIYRYYDTEVQGNTVIRPGEADAGLLAPIRERDFGIALSVDSNPFYGRISPYWGGATAVAEAMRNVAAIGATPSTLTDCLNFGNPEKPEAFWEFRESVRGLADAARNLWLKGHPNQPVPIVSGNVSFYNESPEGAVDPSPVIACVGIMRDISRAITMSLKEAGDGLYLLGPRFDELGGSEYYRLIWGVTGANVPVVRFPLERSMIYTVIDAVDREILRAAHDISNGGMAITAAEMCMLSDHGISIDISDLGDMRSDKLLFSESSGFVVEVADGAEQEFVSIARSYDLNPVRLGSVSTGDIEMARDGKMLVRLDPEEAREAWSSGLREAMR.

His-53 is a catalytic residue. Tyr-56 is an ATP binding site. Glu-98 is a Mg(2+) binding site. Substrate is bound by residues 99–102 (SHNH) and Arg-121. Catalysis depends on His-100, which acts as the Proton acceptor. Asp-122 serves as a coordination point for Mg(2+). A substrate-binding site is contributed by Gln-253. Asp-285 is a Mg(2+) binding site. 328 to 330 (ETQ) is a binding site for substrate. 2 residues coordinate ATP: Asp-516 and Gly-561. Asn-562 is a Mg(2+) binding site. Ser-564 provides a ligand contact to substrate.

The protein belongs to the FGAMS family. In terms of assembly, monomer. Part of the FGAM synthase complex composed of 1 PurL, 1 PurQ and 2 PurS subunits.

It localises to the cytoplasm. The catalysed reaction is N(2)-formyl-N(1)-(5-phospho-beta-D-ribosyl)glycinamide + L-glutamine + ATP + H2O = 2-formamido-N(1)-(5-O-phospho-beta-D-ribosyl)acetamidine + L-glutamate + ADP + phosphate + H(+). The protein operates within purine metabolism; IMP biosynthesis via de novo pathway; 5-amino-1-(5-phospho-D-ribosyl)imidazole from N(2)-formyl-N(1)-(5-phospho-D-ribosyl)glycinamide: step 1/2. In terms of biological role, part of the phosphoribosylformylglycinamidine synthase complex involved in the purines biosynthetic pathway. Catalyzes the ATP-dependent conversion of formylglycinamide ribonucleotide (FGAR) and glutamine to yield formylglycinamidine ribonucleotide (FGAM) and glutamate. The FGAM synthase complex is composed of three subunits. PurQ produces an ammonia molecule by converting glutamine to glutamate. PurL transfers the ammonia molecule to FGAR to form FGAM in an ATP-dependent manner. PurS interacts with PurQ and PurL and is thought to assist in the transfer of the ammonia molecule from PurQ to PurL. The polypeptide is Phosphoribosylformylglycinamidine synthase subunit PurL (Methanothrix thermoacetophila (strain DSM 6194 / JCM 14653 / NBRC 101360 / PT) (Methanosaeta thermophila)).